We begin with the raw amino-acid sequence, 525 residues long: DNA polymerase epsilon subunit 2 (525 aa).

This sequence belongs to the DNA polymerase epsilon subunit B family. In terms of assembly, component of the epsilon DNA polymerase complex consisting of four subunits: the catalytic subunit PolE1/DNApol-epsilon255 and the accessory subunits PolE2/DNApol-epsilon58, Chrac-14/DNApolE3 and PolE4.

The protein localises to the nucleus. In terms of biological role, accessory component of the DNA polymerase epsilon complex. Participates in DNA repair and in chromosomal DNA replication. Has a role in the entrance and progression through S phase. Has a role in endoreplication. Essential for viability and tissue development. This is DNA polymerase epsilon subunit 2 from Drosophila melanogaster (Fruit fly).